We begin with the raw amino-acid sequence, 744 residues long: Eukaryotic translation initiation factor 3 subunit B (744 aa).

The segment at 1 to 20 is disordered; the sequence is MAPSFDHLPDPEEDEYDEEE. Residues 11–20 show a composition bias toward acidic residues; sequence PEEDEYDEEE. The RRM domain occupies 40–126; that stretch reads TFVVIDGLPE…HTLRVNKLTD (87 aa). WD repeat units follow at residues 193–232, 234–290, 307–348, and 577–622; these read DRQHWTESFVQWSPQGTFLTSMHQQGVQLWGGPSWTRQKR, AHPF…PLRS, PVKR…LLDK, and ADHY…LREE. The segment covering 699-714 has biased composition (basic and acidic residues); that stretch reads EREDAGLPRDPLEPLK. Residues 699 to 722 form a disordered region; it reads EREDAGLPRDPLEPLKSKMASGDE.

This sequence belongs to the eIF-3 subunit B family. As to quaternary structure, component of the eukaryotic translation initiation factor 3 (eIF-3) complex.

The protein localises to the cytoplasm. RNA-binding component of the eukaryotic translation initiation factor 3 (eIF-3) complex, which is involved in protein synthesis of a specialized repertoire of mRNAs and, together with other initiation factors, stimulates binding of mRNA and methionyl-tRNAi to the 40S ribosome. The eIF-3 complex specifically targets and initiates translation of a subset of mRNAs involved in cell proliferation. The polypeptide is Eukaryotic translation initiation factor 3 subunit B (prt1) (Sclerotinia sclerotiorum (strain ATCC 18683 / 1980 / Ss-1) (White mold)).